A 390-amino-acid polypeptide reads, in one-letter code: 3-ketoacyl-CoA thiolase (390 aa).

The Acyl-thioester intermediate role is filled by Cys-95. Active-site proton acceptor residues include His-346 and Cys-376.

The protein belongs to the thiolase-like superfamily. Thiolase family. In terms of assembly, heterotetramer of two alpha chains (FadB) and two beta chains (FadA).

Its subcellular location is the cytoplasm. The enzyme catalyses an acyl-CoA + acetyl-CoA = a 3-oxoacyl-CoA + CoA. It participates in lipid metabolism; fatty acid beta-oxidation. In terms of biological role, catalyzes the final step of fatty acid oxidation in which acetyl-CoA is released and the CoA ester of a fatty acid two carbons shorter is formed. The protein is 3-ketoacyl-CoA thiolase of Acinetobacter baumannii (strain AB307-0294).